Reading from the N-terminus, the 203-residue chain is Guanylate kinase (203 aa).

The Guanylate kinase-like domain occupies 3 to 181 (GTLYVVSAPS…TLADLQAIFT (179 aa)). An ATP-binding site is contributed by 10 to 17 (APSGAGKT).

This sequence belongs to the guanylate kinase family.

The protein resides in the cytoplasm. The catalysed reaction is GMP + ATP = GDP + ADP. Essential for recycling GMP and indirectly, cGMP. This is Guanylate kinase from Alkalilimnicola ehrlichii (strain ATCC BAA-1101 / DSM 17681 / MLHE-1).